The following is a 446-amino-acid chain: Putative zinc metalloprotease NMA0084 (446 aa).

A Zn(2+)-binding site is contributed by His18. Residue Glu19 is part of the active site. Position 22 (His22) interacts with Zn(2+). Transmembrane regions (helical) follow at residues 93-115, 376-398, and 419-438; these read IAIV…GLSF, FLAL…LDGG, and NIGL…VAFF. Residues 100–181 form the PDZ domain; the sequence is PLTNLALAVL…KVAVGVQTAS (82 aa).

This sequence belongs to the peptidase M50B family. Zn(2+) is required as a cofactor.

The protein resides in the cell inner membrane. This Neisseria meningitidis serogroup A / serotype 4A (strain DSM 15465 / Z2491) protein is Putative zinc metalloprotease NMA0084.